We begin with the raw amino-acid sequence, 85 residues long: Phosphocarrier protein HPr (85 aa).

Residues 1–85 (MFQNQVKITA…HLSLIMTELE (85 aa)) form the HPr domain. H15 functions as the Pros-phosphohistidine intermediate in the catalytic mechanism.

This sequence belongs to the HPr family.

It is found in the cytoplasm. In terms of biological role, general (non sugar-specific) component of the phosphoenolpyruvate-dependent sugar phosphotransferase system (sugar PTS). This major carbohydrate active-transport system catalyzes the phosphorylation of incoming sugar substrates concomitantly with their translocation across the cell membrane. The phosphoryl group from phosphoenolpyruvate (PEP) is transferred to the phosphoryl carrier protein HPr by enzyme I. Phospho-HPr then transfers it to the PTS EIIA domain. In Buchnera aphidicola subsp. Acyrthosiphon pisum (strain APS) (Acyrthosiphon pisum symbiotic bacterium), this protein is Phosphocarrier protein HPr (ptsH).